The following is a 274-amino-acid chain: Large ribosomal subunit protein uL2 (274 aa).

The segment at 223 to 274 is disordered; it reads VAMNPVDHPHGGGEGRTSGGRHPVTPWGVPTKGYKTRSNKRTDKYIVRRRNK.

It belongs to the universal ribosomal protein uL2 family. Part of the 50S ribosomal subunit. Forms a bridge to the 30S subunit in the 70S ribosome.

Its function is as follows. One of the primary rRNA binding proteins. Required for association of the 30S and 50S subunits to form the 70S ribosome, for tRNA binding and peptide bond formation. It has been suggested to have peptidyltransferase activity; this is somewhat controversial. Makes several contacts with the 16S rRNA in the 70S ribosome. This chain is Large ribosomal subunit protein uL2, found in Shewanella putrefaciens (strain CN-32 / ATCC BAA-453).